The primary structure comprises 67 residues: Large ribosomal subunit protein uL29 (67 aa).

It belongs to the universal ribosomal protein uL29 family.

This Heliobacterium modesticaldum (strain ATCC 51547 / Ice1) protein is Large ribosomal subunit protein uL29.